We begin with the raw amino-acid sequence, 301 residues long: Beta carbonic anhydrase 5, chloroplastic (301 aa).

The transit peptide at 1-56 (MAATPTHFSVSHDPFSSTSLLNLQTQAIFGPNHSLKTTQLRIPASFRRKATNLQVM) directs the protein to the chloroplast. Phosphothreonine is present on threonine 65. Serine 128 carries the post-translational modification Phosphoserine. At cysteine 231 the chain carries S-nitrosocysteine.

It belongs to the beta-class carbonic anhydrase family. As to expression, strongly expressed in aerial tissues including leaves, stems, flowers and siliques.

The protein localises to the plastid. It is found in the chloroplast. The catalysed reaction is hydrogencarbonate + H(+) = CO2 + H2O. Functionally, reversible hydration of carbon dioxide. The protein is Beta carbonic anhydrase 5, chloroplastic (BCA5) of Arabidopsis thaliana (Mouse-ear cress).